We begin with the raw amino-acid sequence, 352 residues long: Protein-glutamate methylesterase/protein-glutamine glutaminase 1 (352 aa).

One can recognise a Response regulatory domain in the interval 5-122 (KVLVVDDSAF…SLDVLSVKEE (118 aa)). The residue at position 56 (Asp56) is a 4-aspartylphosphate. The CheB-type methylesterase domain occupies 155–352 (PDQDRKLNKL…EITEEVLSML (198 aa)). Catalysis depends on residues Ser170, His197, and Asp297.

The protein belongs to the CheB family. In terms of processing, phosphorylated by CheA. Phosphorylation of the N-terminal regulatory domain activates the methylesterase activity.

It is found in the cytoplasm. It carries out the reaction [protein]-L-glutamate 5-O-methyl ester + H2O = L-glutamyl-[protein] + methanol + H(+). It catalyses the reaction L-glutaminyl-[protein] + H2O = L-glutamyl-[protein] + NH4(+). Functionally, involved in chemotaxis. Part of a chemotaxis signal transduction system that modulates chemotaxis in response to various stimuli. Catalyzes the demethylation of specific methylglutamate residues introduced into the chemoreceptors (methyl-accepting chemotaxis proteins or MCP) by CheR. Also mediates the irreversible deamidation of specific glutamine residues to glutamic acid. The polypeptide is Protein-glutamate methylesterase/protein-glutamine glutaminase 1 (Syntrophomonas wolfei subsp. wolfei (strain DSM 2245B / Goettingen)).